A 153-amino-acid chain; its full sequence is Glucose-6-phosphate 1-dehydrogenase (153 aa).

NADP(+) contacts are provided by R21 and K120. Position 120 (K120) interacts with D-glucose 6-phosphate.

This sequence belongs to the glucose-6-phosphate dehydrogenase family.

The protein localises to the cytoplasm. It localises to the cytosol. It catalyses the reaction D-glucose 6-phosphate + NADP(+) = 6-phospho-D-glucono-1,5-lactone + NADPH + H(+). Its pathway is carbohydrate degradation; pentose phosphate pathway; D-ribulose 5-phosphate from D-glucose 6-phosphate (oxidative stage): step 1/3. Its function is as follows. Cytosolic glucose-6-phosphate dehydrogenase that catalyzes the first and rate-limiting step of the oxidative branch within the pentose phosphate pathway/shunt, an alternative route to glycolysis for the dissimilation of carbohydrates and a major source of reducing power and metabolic intermediates for fatty acid and nucleic acid biosynthetic processes. The sequence is that of Glucose-6-phosphate 1-dehydrogenase (ZW) from Culex pipiens (House mosquito).